Consider the following 411-residue polypeptide: Aspartate kinase (411 aa).

The ACT domain occupies 265 to 348 (LTIRGVPDTP…KIAKVSIVGV (84 aa)).

The protein belongs to the aspartokinase family.

It is found in the cytoplasm. The enzyme catalyses L-aspartate + ATP = 4-phospho-L-aspartate + ADP. It functions in the pathway amino-acid biosynthesis; L-lysine biosynthesis via DAP pathway; (S)-tetrahydrodipicolinate from L-aspartate: step 1/4. The protein operates within amino-acid biosynthesis; L-methionine biosynthesis via de novo pathway; L-homoserine from L-aspartate: step 1/3. It participates in amino-acid biosynthesis; L-threonine biosynthesis; L-threonine from L-aspartate: step 1/5. Its activity is regulated as follows. Allosterically feedback inhibited by L-lysine and L-threonine individually and also subject to a concerted feedback inhibition by these amino acids. Involved in the biosynthesis of L-aspartate-beta-semialdehyde which is a central intermediate in the biosynthesis of different amino acids (L-lysine, L-methionine, L-threonine). Catalyzes the phosphorylation of the beta-carboxyl group of L-aspartate to yield 4-phospho-L-aspartate. The protein is Aspartate kinase of Pseudomonas putida (strain ATCC 47054 / DSM 6125 / CFBP 8728 / NCIMB 11950 / KT2440).